A 157-amino-acid chain; its full sequence is Probable succinate transporter subunit YjjB (157 aa).

The next 4 helical transmembrane spans lie at 8-28, 57-77, 87-107, and 129-149; these read FALA…AMVF, LNIE…GIQW, VFTV…TAMI, and FLTA…PGLW.

The protein belongs to the ThrE exporter (TC 2.A.79) family. The transporter is composed of YjjB and YjjP.

It is found in the cell inner membrane. Its function is as follows. Involved in succinate export with YjjP. Both proteins are required for export. In Shigella boydii serotype 4 (strain Sb227), this protein is Probable succinate transporter subunit YjjB.